We begin with the raw amino-acid sequence, 211 residues long: Endo-1,4-beta-xylanase 5 (211 aa).

A signal peptide spans 1 to 16; the sequence is MKVTAAFASLLLTAFA. In terms of domain architecture, GH11 spans 19–210; the sequence is APEPVLVSRS…GVGSASVTIS (192 aa). Glu106 acts as the Nucleophile in catalysis. Catalysis depends on Glu197, which acts as the Proton donor.

This sequence belongs to the glycosyl hydrolase 11 (cellulase G) family.

The protein localises to the secreted. The catalysed reaction is Endohydrolysis of (1-&gt;4)-beta-D-xylosidic linkages in xylans.. Its pathway is glycan degradation; xylan degradation. In terms of biological role, endo-1,4-beta-xylanase involved in the hydrolysis of xylan, a major structural heterogeneous polysaccharide found in plant biomass representing the second most abundant polysaccharide in the biosphere, after cellulose. This is Endo-1,4-beta-xylanase 5 (XYN5) from Aspergillus niger.